A 690-amino-acid chain; its full sequence is Adhesion G protein-coupled receptor L4 (690 aa).

The N-terminal stretch at 1 to 19 (MKRLPLLVVFSTLLNCSYT) is a signal peptide. The 38-residue stretch at 20-57 (QNCTKTPCLPNAKCEIRNGIEACYCNMGFSGNGVTICE) folds into the EGF-like 1 domain. The Extracellular segment spans residues 20-432 (QNCTKTPCLP…DYNILTRITQ (413 aa)). Asparagine 21 is a glycosylation site (N-linked (GlcNAc...) asparagine). 6 disulfides stabilise this stretch: cysteine 22–cysteine 33, cysteine 27–cysteine 42, cysteine 44–cysteine 56, cysteine 62–cysteine 75, cysteine 69–cysteine 84, and cysteine 86–cysteine 107. Positions 58 to 108 (DDNECGNLTQSCGENANCTNTEGSYYCMCVPGFRSSSNQDRFITNDGTVCI) constitute an EGF-like 2; calcium-binding domain. N-linked (GlcNAc...) asparagine glycans are attached at residues asparagine 64 and asparagine 74. N-linked (GlcNAc...) asparagine glycosylation is found at asparagine 127, asparagine 177, asparagine 188, asparagine 249, asparagine 381, and asparagine 395. The GAIN-B domain occupies 244 to 419 (TEFDTNSTDI…AILMSSGPSI (176 aa)). Intrachain disulfides connect cysteine 370/cysteine 401 and cysteine 389/cysteine 403. Positions 370–419 (CAFWNYSPDTMNGSWSSEGCELTYSNETHTSCRCNHLTHFAILMSSGPSI) are GPS. A helical transmembrane segment spans residues 433-453 (LGIIISLICLAICIFTFWFFS). Over 454–460 (EIQSTRT) the chain is Cytoplasmic. Residues 461–481 (TIHKNLCCSLFLAELVFLVGI) traverse the membrane as a helical segment. Residues 482–499 (NTNTNKLFCSIIAGLLHY) are Extracellular-facing. A helical membrane pass occupies residues 500–520 (FFLAAFAWMCIEGIHLYLIVV). Residues 521 to 532 (GVIYNKGFLHKN) are Cytoplasmic-facing. Residues 533-553 (FYIFGYLSPAVVVGFSAALGY) form a helical membrane-spanning segment. The Extracellular portion of the chain corresponds to 554 to 573 (RYYGTTKVCWLSTENNFIWS). A helical membrane pass occupies residues 574-594 (FIGPACLIILVNLLAFGVIIY). Residues 595 to 618 (KVFRHTAGLKPEVSCFENIRSCAR) lie on the Cytoplasmic side of the membrane. The helical transmembrane segment at 619–639 (GALALLFLLGTTWIFGVLHVV) threads the bilayer. Topologically, residues 640–646 (HASVVTA) are extracellular. The chain crosses the membrane as a helical span at residues 647–667 (YLFTVSNAFQGMFIFLFLCVL). Residues 668–690 (SRKIQEEYYRLFKNVPCCFGCLR) lie on the Cytoplasmic side of the membrane.

This sequence belongs to the G-protein coupled receptor 2 family. Adhesion G-protein coupled receptor (ADGR) subfamily. Heterodimer of 2 chains generated by proteolytic processing; the large extracellular N-terminal fragment and the membrane-bound C-terminal fragment predominantly remain associated and non-covalently linked. Post-translationally, glycosylated. In terms of processing, proteolytically cleaved into 2 subunits, an extracellular alpha subunit and a seven-transmembrane subunit. As to expression, detected in the majority of epithelial cells in tumor and normal tissues. Expressed also in human umbilical vein endothelial cells.

The protein resides in the cell membrane. Functionally, endothelial orphan receptor that acts as a key regulator of angiogenesis. The protein is Adhesion G protein-coupled receptor L4 of Homo sapiens (Human).